Here is a 60-residue protein sequence, read N- to C-terminus: Cytotoxin SP15d (60 aa).

4 disulfide bridges follow: Cys3-Cys21, Cys14-Cys38, Cys42-Cys53, and Cys54-Cys59.

This sequence belongs to the three-finger toxin family. Short-chain subfamily. Type IA cytotoxin sub-subfamily. As to quaternary structure, monomer in solution; Homodimer and oligomer in the presence of negatively charged lipids forming a pore with a size ranging between 20 and 30 Angstroms. As to expression, expressed by the venom gland.

It localises to the secreted. It is found in the target cell membrane. Its function is as follows. Shows cytolytic activity on many different cells by forming pore in lipid membranes. In vivo, increases heart rate or kills the animal by cardiac arrest. In addition, it binds to heparin with high affinity, interacts with Kv channel-interacting protein 1 (KCNIP1) in a calcium-independent manner, and binds to integrin alpha-V/beta-3 (ITGAV/ITGB3) with moderate affinity. The protein is Cytotoxin SP15d of Naja atra (Chinese cobra).